Consider the following 757-residue polypeptide: Protein Lines homolog 1 (757 aa).

A Phosphoserine modification is found at Ser635.

This sequence belongs to the protein lines family. Expressed in adult testis, prostate, prostate, spleen, thymus, skeletal muscle, fetal kidney and brain.

The protein is Protein Lines homolog 1 of Homo sapiens (Human).